Here is a 1379-residue protein sequence, read N- to C-terminus: DNA-directed RNA polymerase subunit beta'' (1379 aa).

C220, C293, C300, and C303 together coordinate Zn(2+).

Belongs to the RNA polymerase beta' chain family. RpoC2 subfamily. In plastids the minimal PEP RNA polymerase catalytic core is composed of four subunits: alpha, beta, beta', and beta''. When a (nuclear-encoded) sigma factor is associated with the core the holoenzyme is formed, which can initiate transcription. Requires Zn(2+) as cofactor.

The protein localises to the plastid. Its subcellular location is the chloroplast. The catalysed reaction is RNA(n) + a ribonucleoside 5'-triphosphate = RNA(n+1) + diphosphate. Its function is as follows. DNA-dependent RNA polymerase catalyzes the transcription of DNA into RNA using the four ribonucleoside triphosphates as substrates. This chain is DNA-directed RNA polymerase subunit beta'', found in Crucihimalaya wallichii (Rock-cress).